Consider the following 134-residue polypeptide: Bradykinin-related peptides (134 aa).

Positions 1-22 (MAFLKKSLFLVLFLGVVSLSFC) are cleaved as a signal peptide. Propeptides lie at residues 23 to 44 (EEEK…ESLG), 71 to 82 (RSISGLTPIRLS), and 99 to 121 (ISEA…PLRG). A compositionally biased stretch (basic and acidic residues) spans 24–33 (EEKREEHEEE). The tract at residues 24–71 (EEKREEHEEEKRDEEDAESLGKRYGGLSPLRISKRVPPGFTPFRSPAR) is disordered. Pro-126 carries the 4-hydroxyproline; partial; in form [Hyp3]-bradykinin and [Hyp3]-bradykinin-Val,Asp modification.

It belongs to the frog skin active peptide (FSAP) family. Bradykinin-related peptide subfamily. As to expression, expressed by the skin glands. Expression levels in inguinal glands are much higher than in granular glands.

The protein localises to the secreted. Functionally, may produce in vitro relaxation of rat arterial smooth muscle and constriction of intestinal smooth muscle. May target bradykinin receptors (BDKRB). This chain is Bradykinin-related peptides, found in Physalaemus nattereri (Cuyaba dwarf frog).